Consider the following 136-residue polypeptide: GLEDCDFGWSPYDQHCYQAFNEQKTWDEAEKFCRAQENGAHLASIESNGEADFVSWLISQKDELADEDYVWIGLRAQNKEQQCSSEWSDGSSVSYENLIDLHTKKCGALEKLTGFRKWVNYYCEQMHAFVCKLLPY.

Cystine bridges form between Cys-5-Cys-16, Cys-33-Cys-131, and Cys-106-Cys-123. The C-type lectin domain maps to 12-132 (YDQHCYQAFN…CEQMHAFVCK (121 aa)).

It belongs to the snaclec family. In terms of assembly, dimer (non-covalently linked) of heterodimers of subunits alpha and beta (disulfide-linked). Expressed by the venom gland.

It localises to the secreted. Functionally, elicits platelet aggregation by the binding to the C-type lectin domain family 1 member B (CLEC1B/CLEC2). Binding leads to tyrosine phosphorylation in the cytoplasmic tail of CLEC1B, which promotes the binding of spleen tyrosine kinase (Syk), subsequent activation of PLC-gamma-2, and platelet activation and aggregation. Binding to GPIbalpha (GP1BA) and alpha-2/beta-1 (ITGA2/ITGB1) may also induce aggregation, but this is controversial. The polypeptide is Snaclec rhodocytin subunit alpha (Calloselasma rhodostoma (Malayan pit viper)).